A 163-amino-acid polypeptide reads, in one-letter code: Small ribosomal subunit protein bS18c (163 aa).

2 disordered regions span residues 1 to 52 (MYIS…IGPG) and 144 to 163 (NLRN…SSDC). Positions 7–48 (PFRKSKQPFRKSKQPFHKSKQPFRKFKQPFRKSKQPFRRRSR) are enriched in basic residues.

This sequence belongs to the bacterial ribosomal protein bS18 family. As to quaternary structure, part of the 30S ribosomal subunit.

The protein localises to the plastid. The protein resides in the chloroplast. The protein is Small ribosomal subunit protein bS18c of Saccharum hybrid (Sugarcane).